We begin with the raw amino-acid sequence, 339 residues long: tRNA N6-adenosine threonylcarbamoyltransferase (339 aa).

2 residues coordinate Fe cation: H114 and H118. Substrate contacts are provided by residues 137–141 (VVSGG), D170, G183, D187, and N277. D305 is a binding site for Fe cation.

This sequence belongs to the KAE1 / TsaD family. Fe(2+) is required as a cofactor.

Its subcellular location is the cytoplasm. It carries out the reaction L-threonylcarbamoyladenylate + adenosine(37) in tRNA = N(6)-L-threonylcarbamoyladenosine(37) in tRNA + AMP + H(+). Required for the formation of a threonylcarbamoyl group on adenosine at position 37 (t(6)A37) in tRNAs that read codons beginning with adenine. Is involved in the transfer of the threonylcarbamoyl moiety of threonylcarbamoyl-AMP (TC-AMP) to the N6 group of A37, together with TsaE and TsaB. TsaD likely plays a direct catalytic role in this reaction. The sequence is that of tRNA N6-adenosine threonylcarbamoyltransferase from Clostridium perfringens (strain SM101 / Type A).